Here is a 119-residue protein sequence, read N- to C-terminus: Beta-2-microglobulin (119 aa).

The signal sequence occupies residues methionine 1–alanine 20. An Ig-like C1-type domain is found at proline 25–threonine 114. Cysteine 45 and cysteine 100 form a disulfide bridge.

This sequence belongs to the beta-2-microglobulin family. As to quaternary structure, heterodimer of an alpha chain and a beta chain. Beta-2-microglobulin is the beta-chain of major histocompatibility complex class I molecules.

The protein resides in the secreted. In terms of biological role, component of the class I major histocompatibility complex (MHC). Involved in the presentation of peptide antigens to the immune system. This is Beta-2-microglobulin (B2M) from Sigmodon hispidus (Hispid cotton rat).